The sequence spans 499 residues: Probable 2-isopropylmalate synthase (499 aa).

One can recognise a Pyruvate carboxyltransferase domain in the interval 5–256 (VRIFDTTLRD…ELDVRTEMLV (252 aa)). Residues Asp-14, His-194, His-196, and Asn-230 each coordinate a divalent metal cation.

It belongs to the alpha-IPM synthase/homocitrate synthase family. Homodimer. A divalent metal cation is required as a cofactor.

It catalyses the reaction 3-methyl-2-oxobutanoate + acetyl-CoA + H2O = (2S)-2-isopropylmalate + CoA + H(+). It functions in the pathway amino-acid biosynthesis; L-leucine biosynthesis; L-leucine from 3-methyl-2-oxobutanoate: step 1/4. Its function is as follows. Catalyzes the condensation of the acetyl group of acetyl-CoA with 3-methyl-2-oxobutanoate (2-oxoisovalerate) to form 3-carboxy-3-hydroxy-4-methylpentanoate (2-isopropylmalate). This Methanopyrus kandleri (strain AV19 / DSM 6324 / JCM 9639 / NBRC 100938) protein is Probable 2-isopropylmalate synthase (leuA).